Consider the following 332-residue polypeptide: Trans-2'-carboxybenzalpyruvate hydratase-aldolase (332 aa).

Lysine 178 functions as the Schiff-base intermediate with substrate in the catalytic mechanism.

This sequence belongs to the DapA family. Homotrimer.

It carries out the reaction (3Z)-4-(2-carboxyphenyl)-2-oxobut-3-enoate + H2O = 2-formylbenzoate + pyruvate. Not inhibited by sodium borohydride or sodium pyruvate. Unaffected by EDTA, EGTA, Mn(2+), Mg(2+) and Ca(2+). Functionally, plays a role in phenanthrene catabolism. Catalyzes the transformation of trans-2'-carboxbenzalpyruvate to 2-formylbenzoate and pyruvate. This is Trans-2'-carboxybenzalpyruvate hydratase-aldolase from Nocardioides sp. (strain KP7).